The primary structure comprises 133 residues: DNA-directed RNA polymerases I, II, and III subunit rpabc2 (133 aa).

Over residues 1-32 the composition is skewed to acidic residues; it reads MADFEGGGDDGGYEEFDEGGGFEEEYVEETET. Positions 1 to 55 are disordered; sequence MADFEGGGDDGGYEEFDEGGGFEEEYVEETETTEAYTDIIDPSADANTAEAGRIP.

This sequence belongs to the archaeal Rpo6/eukaryotic RPB6 RNA polymerase subunit family. Component of the RNA polymerase I (Pol I), RNA polymerase II (Pol II) and RNA polymerase III (Pol III) complexes consisting of at least 13, 12 and 17 subunits, respectively.

It is found in the nucleus. Functionally, DNA-dependent RNA polymerases catalyze the transcription of DNA into RNA using the four ribonucleoside triphosphates as substrates. Common component of RNA polymerases I, II and III which synthesize ribosomal RNA precursors, mRNA precursors and many functional non-coding RNAs, and small RNAs, such as 5S rRNA and tRNAs, respectively. Pol II is the central component of the basal RNA polymerase II transcription machinery. Pols are composed of mobile elements that move relative to each other. In Pol II, RPB6 is part of the clamp element and together with parts of RPB1 and RPB2 forms a pocket to which the RPB4-RPB7 subcomplex binds. The chain is DNA-directed RNA polymerases I, II, and III subunit rpabc2 (polr2f) from Dictyostelium discoideum (Social amoeba).